The primary structure comprises 416 residues: MTYVDTLGQQAKVASRQIAKLSTAAKNDLLNQVAKALVAESDYIFTENAKDMANASENGISKIMQDRLLLTEDRIAGIAEGVRQVADLQDPIGQVVRGYTNLDGLKIVQKRVPMGVIAMIFESRPNVSIDAFSLAFKTNNAIILRGGRDAINSNKALVTVARKALKNAGITADAVQFVEDTSHEVAEELMVATKYVDLLIPRGGARLIQTVKEKAKVPVIETGVGNCHIYVDKYANLDMATQIVINAKTQRPSVCNAAESLVVHADIVEEFLPNLEKAISKIQSVEFRADERALKLMEKAVPASPEDFATEFLDYIMSVKVVDSLDEAINWINTYTTSHSEAIVTQDISRAEQFQDDVDAAAVYVNASTRFTDGFVFGLGAEIGISTQKMHARGPMGLEALTSTKFYINGQGQIRE.

This sequence belongs to the gamma-glutamyl phosphate reductase family.

Its subcellular location is the cytoplasm. The catalysed reaction is L-glutamate 5-semialdehyde + phosphate + NADP(+) = L-glutamyl 5-phosphate + NADPH + H(+). The protein operates within amino-acid biosynthesis; L-proline biosynthesis; L-glutamate 5-semialdehyde from L-glutamate: step 2/2. Catalyzes the NADPH-dependent reduction of L-glutamate 5-phosphate into L-glutamate 5-semialdehyde and phosphate. The product spontaneously undergoes cyclization to form 1-pyrroline-5-carboxylate. This Streptococcus thermophilus protein is Gamma-glutamyl phosphate reductase.